Consider the following 229-residue polypeptide: 2-C-methyl-D-erythritol 4-phosphate cytidylyltransferase (229 aa).

This sequence belongs to the IspD/TarI cytidylyltransferase family. IspD subfamily.

It catalyses the reaction 2-C-methyl-D-erythritol 4-phosphate + CTP + H(+) = 4-CDP-2-C-methyl-D-erythritol + diphosphate. Its pathway is isoprenoid biosynthesis; isopentenyl diphosphate biosynthesis via DXP pathway; isopentenyl diphosphate from 1-deoxy-D-xylulose 5-phosphate: step 2/6. In terms of biological role, catalyzes the formation of 4-diphosphocytidyl-2-C-methyl-D-erythritol from CTP and 2-C-methyl-D-erythritol 4-phosphate (MEP). The sequence is that of 2-C-methyl-D-erythritol 4-phosphate cytidylyltransferase from Neisseria gonorrhoeae (strain ATCC 700825 / FA 1090).